The following is a 677-amino-acid chain: MTQVAKKILVTCALPYANGSIHLGHMLEHIQADVWVRYQRMRGHEVNFICADDAHGTPIMLKAQQLGITPEQMIGEMSQEHQTDFAGFNISYDNYHSTHSDENRELSELIYTRLKENGFIKNRTISQLYDPEKGMFLPDRFVKGTCPKCKSADQYGDNCEVCGATYSPTELIEPKSVVSGATPVMRDSEHFFFDLPSFSEMLQAWTRSGALQEQVANKMQEWFESGLQQWDISRDAPYFGFEIPNAPGKYFYVWLDAPIGYMGSFKNLCDKRGDTTSFDEYWKKDSDAELYHFIGKDIVYFHSLFWPAMLEGSHFRKPTNLFVHGYVTVNGAKMSKSRGTFIKASTWLKHFDADSLRYYYTAKLSSRIDDIDLNLEDFVQRVNADIVNKVVNLASRNAGFINKRFDGVLAAELADPQLYKTFTDAAAVIGEAWESREFGKAIREIMALADVANRYVDEQAPWVVAKQEGRDADLQAICSMGINLFRVLMTYLKPVLPTLSERVEAFLNSELNWDAIEQPLLSHKVNTFKALYNRIDMKQVEALVEASKEEVKAAAAPVTGPLADFPIQETITFDDFAKIDLRVALIENAEFVEGSDKLLRLTLDLGGEKRNVFSGIRSAYPDPQALIGRQTVMVANLAPRKMRFGVSEGMVMAAGPGGKDIFLLSPDDGAKPGQQVK.

Residues 15–25 (PYANGSIHLGH) carry the 'HIGH' region motif. Positions 146, 149, 159, and 162 each coordinate Zn(2+). The 'KMSKS' region signature appears at 333-337 (KMSKS). ATP is bound at residue lysine 336. The region spanning 575–677 (DFAKIDLRVA…DGAKPGQQVK (103 aa)) is the tRNA-binding domain.

This sequence belongs to the class-I aminoacyl-tRNA synthetase family. MetG type 1 subfamily. As to quaternary structure, homodimer. Requires Zn(2+) as cofactor.

Its subcellular location is the cytoplasm. The catalysed reaction is tRNA(Met) + L-methionine + ATP = L-methionyl-tRNA(Met) + AMP + diphosphate. Is required not only for elongation of protein synthesis but also for the initiation of all mRNA translation through initiator tRNA(fMet) aminoacylation. The chain is Methionine--tRNA ligase from Salmonella choleraesuis (strain SC-B67).